The sequence spans 1139 residues: Solute carrier family 12 member 5 (1139 aa).

2 disordered regions span residues 1 to 62 (MSRR…KGRE) and 95 to 116 (PQGS…KPVQ). Over 1 to 98 (MSRRFTVTSL…ANYTNLPQGS (98 aa)) the chain is Cytoplasmic. Residues 21–45 (PESRRHSVADPRRLPREDVKGDGNP) are compositionally biased toward basic and acidic residues. The segment covering 46 to 55 (KESSPFINST) has biased composition (polar residues). Thr57 is modified (phosphothreonine). Over residues 98–111 (SKEHEEAENNEGGK) the composition is skewed to basic and acidic residues. Residues 99–120 (KEHEEAENNEGGKKKPVQAPRM) traverse the membrane as a discontinuously helical segment. Residue Lys113 coordinates K(+). At 121–129 (GTFMGVYLP) the chain is on the extracellular side. The chain crosses the membrane as a helical span at residues 130 to 151 (CLQNIFGVILFLRLTWVVGIAG). Residues 152–174 (IMESFCMVFICCSCTMLTAISMS) are Cytoplasmic-facing. Residues 175–203 (AIATNGVVPAGGSYYMISRSLGPEFGGAV) form a helical membrane-spanning segment. Ala184 lines the chloride pocket. The Extracellular segment spans residues 204 to 229 (GLCFYLGTTFAGAMYILGTIEILLAY). 2 helical membrane-spanning segments follow: residues 230–250 (LFPA…AAML) and 251–276 (NNMR…KYVN). Residues 277–402 (KFALVFLGCV…ERRGMPSVGL (126 aa)) are Extracellular-facing. Cysteines 310 and 325 form a disulfide. N-linked (GlcNAc...) asparagine glycosylation is found at Asn314, Asn333, Asn351, and Asn362. An intrachain disulfide couples Cys345 to Cys354. The helical transmembrane segment at 403–420 (ADGTPVDMDHPYVFSDMT) threads the bilayer. Met410 serves as a coordination point for K(+). Chloride-binding residues include Tyr414 and Val415. Topologically, residues 421-429 (SYFTLLVGI) are cytoplasmic. The chain crosses the membrane as a helical span at residues 430–453 (YFPSVTGIMAGSNRSGDLRDAQKS). K(+) is bound at residue Asp446. Over 454–485 (IPTGTILAIATTSAVYISSVVLFGACIEGVVL) the chain is Extracellular. Residues 486-513 (RDKFGEAVNGNLVVGTLAWPSPWVIVIG) form a helical membrane-spanning segment. Residues 514–534 (SFFSTCGAGLQSLTGAPRLLQ) are Cytoplasmic-facing. 2 helical membrane passes run 535–555 (AISR…KANG) and 556–578 (EPTW…ASLD). Glu569 contacts chloride. At 579–592 (EVAPILSMFFLMCY) the chain is on the cytoplasmic side. The next 2 membrane-spanning stretches (helical) occupy residues 593-615 (MFVN…PRFR) and 616-632 (YYHW…CLAL). At 633 to 1139 (MFICSWYYAL…GGREVITIYS (507 aa)) the chain is on the cytoplasmic side. The scissor helix stretch occupies residues 667 to 681 (GIRGLSLSAARYALL). Thr929 is modified (phosphothreonine; by OXSR1 and STK39). The segment at 943–1025 (HLTKNERERE…PEGEGETDPE (83 aa)) is disordered. The segment covering 945–962 (TKNEREREIQSITDESRG) has biased composition (basic and acidic residues). The segment covering 982 to 994 (TACDNEEKPEEEV) has biased composition (acidic residues). Low complexity predominate over residues 1003 to 1012 (PSCPSSSPSP). Thr1030 carries the post-translational modification Phosphothreonine; by OXSR1 and STK39. Residues 1033 to 1052 (KDKSAAQKNKGPSPVSSEGI) are disordered. Phosphoserine occurs at positions 1045, 1048, and 1049.

The protein belongs to the SLC12A transporter family. K/Cl co-transporter subfamily. As to quaternary structure, homodimer; adopts a domain-swap conformation at the scissor helices connecting the transmembrane domain and C-terminal domain. Heterodimer wHeterodimer with K-Cl cotransporters SLC12A6 and SLC12A7. Interacts with AP2A1. Post-translationally, phosphorylated at Thr-929 and Thr-1030 by OXSR1/OSR1 and STK39/SPAK downstream of WNK kinases (WNK1, WNK2, WNK3 or WNK4), inhibiting the potassium-chloride cotransport activity. Highly expressed in brain. Not detected in other tissues. Highly expressed in pyramidal neurons and in neurons throughout the cortex, hippocampus, the granular layer of the cerebellum and in groups of neurons throughout the brainstem. Barely detectable in dorsal-root ganglions.

The protein resides in the cell membrane. It localises to the cell projection. The protein localises to the dendrite. It catalyses the reaction K(+)(in) + chloride(in) = K(+)(out) + chloride(out). With respect to regulation, inhibited following phosphorylation by OXSR1/OSR1 and STK39/SPAK: phosphorylation takes place downstream of WNK kinases (WNK1, WNK2, WNK3 or WNK4) in response to hyperosmotic stress and subsequent cell shrinkage. Mediates electroneutral potassium-chloride cotransport in mature neurons and is required for neuronal Cl(-) homeostasis. As major extruder of intracellular chloride, it establishes the low neuronal Cl(-) levels required for chloride influx after binding of GABA-A and glycine to their receptors, with subsequent hyperpolarization and neuronal inhibition. Involved in the regulation of dendritic spine formation and maturation. This Rattus norvegicus (Rat) protein is Solute carrier family 12 member 5 (Slc12a5).